Consider the following 351-residue polypeptide: Pentatricopeptide repeat-containing protein At3g56030, mitochondrial (351 aa).

A mitochondrion-targeting transit peptide spans 1-41 (MFRLKPLISVDLNQTMSLLRRFVKEANNSRFLLQSISGRSF). PPR repeat units follow at residues 124-158 (RKHS…EFGL), 159-193 (STCV…AIPV), 194-224 (DVTS…MEEE), and 232-266 (DTRT…GLSV).

The protein belongs to the PPR family. P subfamily.

The protein localises to the mitochondrion. This is Pentatricopeptide repeat-containing protein At3g56030, mitochondrial from Arabidopsis thaliana (Mouse-ear cress).